A 281-amino-acid polypeptide reads, in one-letter code: Putative phosphatase/phosphodiesterase MPN_349 (281 aa).

Positions 12, 43, 44, and 71 each coordinate Fe cation. His72 acts as the Proton donor in catalysis. Fe cation is bound by residues His158, His183, and His185.

Belongs to the YmdB-like family. Requires Fe(3+) as cofactor.

The protein is Putative phosphatase/phosphodiesterase MPN_349 of Mycoplasma pneumoniae (strain ATCC 29342 / M129 / Subtype 1) (Mycoplasmoides pneumoniae).